Consider the following 426-residue polypeptide: Histone-binding protein RBBP7 (426 aa).

WD repeat units follow at residues 47-123 (QWLP…KINH), 129-174 (RARY…LRLR), 182-218 (GLSWNPNLSGNLLSASDDHTICLWDISGAPKEGKIVD), 229-270 (VVED…HSVD), 276-313 (VNCLSFNPYSEFILATGSADKTVALWDLRNLKLKLHSF), 319-370 (EIFQ…LFIH), and 377-404 (ISDFSWNPNEPWVICSVSEDNIMQVWQM).

The protein belongs to the WD repeat RBAP46/RBAP48/MSI1 family. As to quaternary structure, binds directly to helix 1 of the histone fold of histone H4, a region that is not accessible when H4 is in chromatin.

It is found in the nucleus. In terms of biological role, core histone-binding subunit that may target chromatin remodeling factors, histone acetyltransferases and histone deacetylases to their histone substrates in a manner that is regulated by nucleosomal DNA. Component of several complexes which regulate chromatin metabolism. This chain is Histone-binding protein RBBP7 (rbbp7), found in Danio rerio (Zebrafish).